Here is a 149-residue protein sequence, read N- to C-terminus: Large ribosomal subunit protein bL9 (149 aa).

This sequence belongs to the bacterial ribosomal protein bL9 family.

Functionally, binds to the 23S rRNA. The sequence is that of Large ribosomal subunit protein bL9 from Clostridioides difficile (strain 630) (Peptoclostridium difficile).